Here is a 484-residue protein sequence, read N- to C-terminus: Adenylosuccinate synthetase, chloroplastic (484 aa).

Residues 1–44 (MSLSTLSHPAAAAAGSGKSLFPAGPAAQSVHFPKARLPVPAAVS) constitute a chloroplast transit peptide. Residues 71 to 77 (GDEGKGK) and 99 to 101 (GHT) each bind GTP. Asp72 acts as the Proton acceptor in catalysis. 2 residues coordinate Mg(2+): Asp72 and Gly99. IMP is bound by residues 72 to 75 (DEGK), 97 to 100 (NAGH), Thr189, Arg203, Gln283, Thr298, and Arg362. His100 (proton donor) is an active-site residue. 358–364 (TTTGRPR) is a binding site for substrate. GTP-binding positions include Arg364, 390-392 (KLD), and 473-475 (GVG).

The protein belongs to the adenylosuccinate synthetase family. Homodimer. It depends on Mg(2+) as a cofactor.

Its subcellular location is the plastid. The protein localises to the chloroplast. The enzyme catalyses IMP + L-aspartate + GTP = N(6)-(1,2-dicarboxyethyl)-AMP + GDP + phosphate + 2 H(+). Its pathway is purine metabolism; AMP biosynthesis via de novo pathway; AMP from IMP: step 1/2. Its function is as follows. Plays an important role in the de novo pathway and in the salvage pathway of purine nucleotide biosynthesis. Catalyzes the first committed step in the biosynthesis of AMP from IMP. The polypeptide is Adenylosuccinate synthetase, chloroplastic (Zea mays (Maize)).